The primary structure comprises 890 residues: UPF0182 protein Ppro_2689 (890 aa).

The next 7 membrane-spanning stretches (helical) occupy residues 6–26 (FILILVIVALTVSLLSFLLAF), 50–70 (AGSGLLFAGVLFAGTLLNLLL), 102–122 (LGIPACAILALLVGQWGAMQW), 157–177 (TITAFAGFTLLTSLFLTVLVY), 200–220 (LAILLLLLSCVIAAGFHLDCF), 244–264 (TYRILTILAPLAGTALAIGLW), and 266–286 (GAWRMALLAPLAVIVLHVIGI).

Belongs to the UPF0182 family.

Its subcellular location is the cell membrane. This Pelobacter propionicus (strain DSM 2379 / NBRC 103807 / OttBd1) protein is UPF0182 protein Ppro_2689.